Consider the following 356-residue polypeptide: Nucleotide-binding protein GDI1189/Gdia_1902 (356 aa).

20-27 (GLSGAGKS) contacts ATP. 65 to 68 (DSRT) is a GTP binding site. Residues 285–313 (EPGGTCDSPGKPAHIEKGAAPTDVQSGGA) form a disordered region.

Belongs to the RapZ-like family.

Displays ATPase and GTPase activities. The protein is Nucleotide-binding protein GDI1189/Gdia_1902 of Gluconacetobacter diazotrophicus (strain ATCC 49037 / DSM 5601 / CCUG 37298 / CIP 103539 / LMG 7603 / PAl5).